The primary structure comprises 457 residues: TnpB-like protein ORF457 (457 aa).

Positions 1–22 (MPPSSGQLLGDEEREPTSTPAI) are disordered.

In the N-terminal section; belongs to the transposase 2 family. It in the C-terminal section; belongs to the transposase 35 family.

This is TnpB-like protein ORF457 from Acidianus two-tailed virus (ATV).